Here is a 272-residue protein sequence, read N- to C-terminus: Shikimate dehydrogenase (NADP(+)) (272 aa).

Shikimate contacts are provided by residues 14–16 and T61; that span reads SKS. K65 (proton acceptor) is an active-site residue. An NADP(+)-binding site is contributed by E77. 2 residues coordinate shikimate: N86 and D102. Residues 126-130, 149-154, and M213 each bind NADP(+); these read GAGGA and NRTVSR. Y215 is a shikimate binding site. G237 lines the NADP(+) pocket.

It belongs to the shikimate dehydrogenase family. As to quaternary structure, homodimer.

It catalyses the reaction shikimate + NADP(+) = 3-dehydroshikimate + NADPH + H(+). It functions in the pathway metabolic intermediate biosynthesis; chorismate biosynthesis; chorismate from D-erythrose 4-phosphate and phosphoenolpyruvate: step 4/7. In terms of biological role, involved in the biosynthesis of the chorismate, which leads to the biosynthesis of aromatic amino acids. Catalyzes the reversible NADPH linked reduction of 3-dehydroshikimate (DHSA) to yield shikimate (SA). This chain is Shikimate dehydrogenase (NADP(+)), found in Shigella flexneri serotype 5b (strain 8401).